We begin with the raw amino-acid sequence, 99 residues long: Small ribosomal subunit protein uS19 (99 aa).

Residues Thr77–Arg99 form a disordered region.

The protein belongs to the universal ribosomal protein uS19 family.

In terms of biological role, protein S19 forms a complex with S13 that binds strongly to the 16S ribosomal RNA. The sequence is that of Small ribosomal subunit protein uS19 from Sorangium cellulosum (strain So ce56) (Polyangium cellulosum (strain So ce56)).